The chain runs to 243 residues: Glutathione S-transferase U14 (243 aa).

Residues 5–87 (DTVKLIGCSD…YLDEAWPSDP (83 aa)) enclose the GST N-terminal domain. Glutathione contacts are provided by residues 15–16 (DP), 44–45 (EK), 58–59 (KT), and 71–72 (ES). Residues 93–220 (NAYDRASARF…MPTVEEVTEL (128 aa)) form the GST C-terminal domain. The residue at position 159 (T159) is a Phosphothreonine.

The protein belongs to the GST superfamily. Tau family.

The protein localises to the cytoplasm. The protein resides in the cytosol. It catalyses the reaction RX + glutathione = an S-substituted glutathione + a halide anion + H(+). In terms of biological role, may be involved in the conjugation of reduced glutathione to a wide number of exogenous and endogenous hydrophobic electrophiles and have a detoxification role against certain herbicides. The chain is Glutathione S-transferase U14 (GSTU14) from Arabidopsis thaliana (Mouse-ear cress).